A 447-amino-acid chain; its full sequence is NADH-quinone oxidoreductase subunit F (447 aa).

61–70 (GRGGAGFSTG) is a binding site for NAD(+). Residue 174 to 221 (GAGRYICGEETALINSLEGRRANPRAKPPFPAVFGLWGKPTCVNNVET) coordinates FMN. Positions 352, 355, 358, and 399 each coordinate [4Fe-4S] cluster.

The protein belongs to the complex I 51 kDa subunit family. As to quaternary structure, composed of 13 different subunits. Subunits NuoCD, E, F, and G constitute the peripheral sector of the complex. [4Fe-4S] cluster serves as cofactor. The cofactor is FMN.

The catalysed reaction is a quinone + NADH + 5 H(+)(in) = a quinol + NAD(+) + 4 H(+)(out). In terms of biological role, NDH-1 shuttles electrons from NADH, via FMN and iron-sulfur (Fe-S) centers, to quinones in the respiratory chain. Couples the redox reaction to proton translocation (for every two electrons transferred, four hydrogen ions are translocated across the cytoplasmic membrane), and thus conserves the redox energy in a proton gradient. This chain is NADH-quinone oxidoreductase subunit F (nuoF), found in Buchnera aphidicola subsp. Schizaphis graminum (strain Sg).